Consider the following 156-residue polypeptide: Cyanate hydratase (156 aa).

Residues R96, E99, and S122 contribute to the active site.

This sequence belongs to the cyanase family.

It catalyses the reaction cyanate + hydrogencarbonate + 3 H(+) = NH4(+) + 2 CO2. Functionally, catalyzes the reaction of cyanate with bicarbonate to produce ammonia and carbon dioxide. This chain is Cyanate hydratase, found in Burkholderia cenocepacia (strain ATCC BAA-245 / DSM 16553 / LMG 16656 / NCTC 13227 / J2315 / CF5610) (Burkholderia cepacia (strain J2315)).